We begin with the raw amino-acid sequence, 154 residues long: N-acetylneuraminate anomerase NanQ (154 aa).

It belongs to the NanQ anomerase family. Zn(2+) serves as cofactor.

Its subcellular location is the cytoplasm. The catalysed reaction is N-acetyl-alpha-neuraminate = aceneuramate. It carries out the reaction N-acetyl-beta-neuraminate = aceneuramate. Inhibited by 1,10-phenanthroline. Functionally, opens both the alpha- and beta-forms of N-acetylneuraminate (sialic acid; Neu5Ac) to provide aceneuramate, the preferred substrate for NanA. Has preferential activity on the beta-anomer rather than the alpha-anomer. Accelerates a reaction that is spontaneous at slightly alkaline pH, facilitates the reaction at acidic pH. In Escherichia coli (strain K12), this protein is N-acetylneuraminate anomerase NanQ.